The following is a 265-amino-acid chain: Methylthioribulose-1-phosphate dehydratase (265 aa).

C116 is a substrate binding site. The Zn(2+) site is built by H134 and H136. Catalysis depends on E159, which acts as the Proton donor/acceptor. Residue H224 participates in Zn(2+) binding.

This sequence belongs to the aldolase class II family. MtnB subfamily. The cofactor is Zn(2+).

It is found in the cytoplasm. The enzyme catalyses 5-(methylsulfanyl)-D-ribulose 1-phosphate = 5-methylsulfanyl-2,3-dioxopentyl phosphate + H2O. Its pathway is amino-acid biosynthesis; L-methionine biosynthesis via salvage pathway; L-methionine from S-methyl-5-thio-alpha-D-ribose 1-phosphate: step 2/6. Functionally, catalyzes the dehydration of methylthioribulose-1-phosphate (MTRu-1-P) into 2,3-diketo-5-methylthiopentyl-1-phosphate (DK-MTP-1-P). The sequence is that of Methylthioribulose-1-phosphate dehydratase from Debaryomyces hansenii (strain ATCC 36239 / CBS 767 / BCRC 21394 / JCM 1990 / NBRC 0083 / IGC 2968) (Yeast).